A 1255-amino-acid chain; its full sequence is Bifunctional autolysin (1255 aa).

Residues 1–36 form the signal peptide; it reads MLGVINRMAKKFNYKLPSMVALTLVGSAVTAHQVQA. Disordered regions lie at residues 110 to 141 and 193 to 218; these read GDTR…NTNV and VTTF…KYKP. An N-acetylmuramoyl-L-alanine amidase region spans residues 199 to 775; sequence SAQPRSVAAT…VAQPKTAVKA (577 aa). GW domains lie at 442–516, 518–592, 611–685, 687–761, 783–858, 860–935, and 942–1016; these read TVAA…YNTA, SPVN…DTAK, TVSS…YNNA, SPVN…VPAA, TTQT…VQNL, KEVK…APTA, and AAKD…KELI. The tract at residues 776 to 1255 is endo-beta-N-acetylglucosaminidase; that stretch reads YTVTKPQTTQ…GKYFDIPQYK (480 aa).

It in the N-terminal section; belongs to the N-acetylmuramoyl-L-alanine amidase 2 family. In the C-terminal section; belongs to the glycosyl hydrolase 73 family. In terms of assembly, oligomer; forms a ring structure at the cell surface which is important for efficient partitioning of daughter cells after cell division. Undergoes proteolytic processing to generate the two extracellular lytic enzymes, probably at the septal region on the cell surface.

It localises to the secreted. It catalyses the reaction Hydrolyzes the link between N-acetylmuramoyl residues and L-amino acid residues in certain cell-wall glycopeptides.. The catalysed reaction is an N(4)-(oligosaccharide-(1-&gt;3)-[oligosaccharide-(1-&gt;6)]-beta-D-Man-(1-&gt;4)-beta-D-GlcNAc-(1-&gt;4)-alpha-D-GlcNAc)-L-asparaginyl-[protein] + H2O = an oligosaccharide-(1-&gt;3)-[oligosaccharide-(1-&gt;6)]-beta-D-Man-(1-&gt;4)-D-GlcNAc + N(4)-(N-acetyl-beta-D-glucosaminyl)-L-asparaginyl-[protein]. Functionally, endohydrolysis of the di-N-acetylchitobiosyl unit in high-mannose glycopeptides and glycoproteins containing the -[(Man)5(GlcNAc)2]-Asn structure. One N-acetyl-D-glucosamine residue remains attached to the protein; the rest of the oligosaccharide is released intact. Cleaves the peptidoglycan connecting the daughter cells at the end of the cell division cycle, resulting in the separation of the two newly divided cells. Acts as an autolysin in penicillin-induced lysis. The sequence is that of Bifunctional autolysin (atl) from Staphylococcus aureus (strain Mu3 / ATCC 700698).